The primary structure comprises 132 residues: L-ectoine synthase (132 aa).

This sequence belongs to the ectoine synthase family.

The enzyme catalyses (2S)-4-acetamido-2-aminobutanoate = L-ectoine + H2O. The protein operates within amine and polyamine biosynthesis; ectoine biosynthesis; L-ectoine from L-aspartate 4-semialdehyde: step 3/3. Its function is as follows. Catalyzes the circularization of gamma-N-acetyl-alpha,gamma-diaminobutyric acid (ADABA) to ectoine (1,4,5,6-tetrahydro-2-methyl-4-pyrimidine carboxylic acid), which is an excellent osmoprotectant. This is L-ectoine synthase from Rhodococcus jostii (strain RHA1).